The primary structure comprises 500 residues: Glycerol kinase (500 aa).

T13 serves as a coordination point for ADP. T13, T14, and S15 together coordinate ATP. T13 is a binding site for sn-glycerol 3-phosphate. R17 is an ADP binding site. Residues R83, E84, Y135, and D244 each contribute to the sn-glycerol 3-phosphate site. Residues R83, E84, Y135, D244, and Q245 each coordinate glycerol. T266 and G309 together coordinate ADP. Residues T266, G309, Q313, and G410 each contribute to the ATP site. Residues G410 and N414 each contribute to the ADP site.

The protein belongs to the FGGY kinase family.

It catalyses the reaction glycerol + ATP = sn-glycerol 3-phosphate + ADP + H(+). Its pathway is polyol metabolism; glycerol degradation via glycerol kinase pathway; sn-glycerol 3-phosphate from glycerol: step 1/1. With respect to regulation, inhibited by fructose 1,6-bisphosphate (FBP). In terms of biological role, key enzyme in the regulation of glycerol uptake and metabolism. Catalyzes the phosphorylation of glycerol to yield sn-glycerol 3-phosphate. In Burkholderia pseudomallei (strain K96243), this protein is Glycerol kinase.